Here is a 216-residue protein sequence, read N- to C-terminus: Cytidylate kinase (216 aa).

ATP is bound at residue Gly7–Thr15.

Belongs to the cytidylate kinase family. Type 1 subfamily.

It is found in the cytoplasm. It catalyses the reaction CMP + ATP = CDP + ADP. It carries out the reaction dCMP + ATP = dCDP + ADP. The chain is Cytidylate kinase from Chlamydia trachomatis serovar A (strain ATCC VR-571B / DSM 19440 / HAR-13).